Consider the following 338-residue polypeptide: Ketol-acid reductoisomerase (NADP(+)) (338 aa).

The region spanning 1-181 (MKVYYDSDAD…GGGRAGIIET (181 aa)) is the KARI N-terminal Rossmann domain. Residues 24–27 (YGSQ), Arg-47, Ser-50, Ser-52, and 82–85 (DEHQ) contribute to the NADP(+) site. His-107 is a catalytic residue. Gly-133 is an NADP(+) binding site. The KARI C-terminal knotted domain maps to 182–327 (SFKEETETDL…AKLRAMMPWI (146 aa)). Residues Asp-190, Glu-194, Glu-226, and Glu-230 each coordinate Mg(2+). Residue Ser-251 coordinates substrate.

It belongs to the ketol-acid reductoisomerase family. Mg(2+) serves as cofactor.

It carries out the reaction (2R)-2,3-dihydroxy-3-methylbutanoate + NADP(+) = (2S)-2-acetolactate + NADPH + H(+). The enzyme catalyses (2R,3R)-2,3-dihydroxy-3-methylpentanoate + NADP(+) = (S)-2-ethyl-2-hydroxy-3-oxobutanoate + NADPH + H(+). Its pathway is amino-acid biosynthesis; L-isoleucine biosynthesis; L-isoleucine from 2-oxobutanoate: step 2/4. It participates in amino-acid biosynthesis; L-valine biosynthesis; L-valine from pyruvate: step 2/4. Functionally, involved in the biosynthesis of branched-chain amino acids (BCAA). Catalyzes an alkyl-migration followed by a ketol-acid reduction of (S)-2-acetolactate (S2AL) to yield (R)-2,3-dihydroxy-isovalerate. In the isomerase reaction, S2AL is rearranged via a Mg-dependent methyl migration to produce 3-hydroxy-3-methyl-2-ketobutyrate (HMKB). In the reductase reaction, this 2-ketoacid undergoes a metal-dependent reduction by NADPH to yield (R)-2,3-dihydroxy-isovalerate. This Magnetococcus marinus (strain ATCC BAA-1437 / JCM 17883 / MC-1) protein is Ketol-acid reductoisomerase (NADP(+)).